We begin with the raw amino-acid sequence, 311 residues long: Ribosomal protein L11 methyltransferase (311 aa).

Positions 162, 183, 205, and 248 each coordinate S-adenosyl-L-methionine.

It belongs to the methyltransferase superfamily. PrmA family.

It localises to the cytoplasm. The enzyme catalyses L-lysyl-[protein] + 3 S-adenosyl-L-methionine = N(6),N(6),N(6)-trimethyl-L-lysyl-[protein] + 3 S-adenosyl-L-homocysteine + 3 H(+). Functionally, methylates ribosomal protein L11. The protein is Ribosomal protein L11 methyltransferase of Bacillus subtilis (strain 168).